The primary structure comprises 673 residues: UvrABC system protein B (673 aa).

One can recognise a Helicase ATP-binding domain in the interval 26–414; sequence EGLEDGLAHQ…GGDVVDQVVR (389 aa). ATP is bound at residue 39 to 46; the sequence is GVTGSGKT. A Beta-hairpin motif is present at residues 92-115; that stretch reads YYDYYQPEAYVPSSDTFIEKDASV. Residues 431-597 enclose the Helicase C-terminal domain; that stretch reads QVDDLLSEIR…GLNKKVVDIL (167 aa). The region spanning 633–668 is the UVR domain; that stretch reads LQKIHELEGLMMQHAQNLEFEEAAQIRDQLHQLREL.

The protein belongs to the UvrB family. In terms of assembly, forms a heterotetramer with UvrA during the search for lesions. Interacts with UvrC in an incision complex.

The protein resides in the cytoplasm. In terms of biological role, the UvrABC repair system catalyzes the recognition and processing of DNA lesions. A damage recognition complex composed of 2 UvrA and 2 UvrB subunits scans DNA for abnormalities. Upon binding of the UvrA(2)B(2) complex to a putative damaged site, the DNA wraps around one UvrB monomer. DNA wrap is dependent on ATP binding by UvrB and probably causes local melting of the DNA helix, facilitating insertion of UvrB beta-hairpin between the DNA strands. Then UvrB probes one DNA strand for the presence of a lesion. If a lesion is found the UvrA subunits dissociate and the UvrB-DNA preincision complex is formed. This complex is subsequently bound by UvrC and the second UvrB is released. If no lesion is found, the DNA wraps around the other UvrB subunit that will check the other stand for damage. In Shigella dysenteriae serotype 1 (strain Sd197), this protein is UvrABC system protein B.